The chain runs to 157 residues: Transcription elongation factor GreA (157 aa).

A coiled-coil region spans residues Leu12 to Lys74.

The protein belongs to the GreA/GreB family.

In terms of biological role, necessary for efficient RNA polymerase transcription elongation past template-encoded arresting sites. The arresting sites in DNA have the property of trapping a certain fraction of elongating RNA polymerases that pass through, resulting in locked ternary complexes. Cleavage of the nascent transcript by cleavage factors such as GreA or GreB allows the resumption of elongation from the new 3'terminus. GreA releases sequences of 2 to 3 nucleotides. The chain is Transcription elongation factor GreA from Caldanaerobacter subterraneus subsp. tengcongensis (strain DSM 15242 / JCM 11007 / NBRC 100824 / MB4) (Thermoanaerobacter tengcongensis).